Reading from the N-terminus, the 189-residue chain is dCTP deaminase (189 aa).

Residues 112–117 (KSTYAR), 136–138 (TLE), glutamine 157, tyrosine 171, and glutamine 181 each bind dCTP. Glutamate 138 (proton donor/acceptor) is an active-site residue.

Belongs to the dCTP deaminase family. In terms of assembly, homotrimer.

The enzyme catalyses dCTP + H2O + H(+) = dUTP + NH4(+). It participates in pyrimidine metabolism; dUMP biosynthesis; dUMP from dCTP (dUTP route): step 1/2. Catalyzes the deamination of dCTP to dUTP. In Xanthomonas euvesicatoria pv. vesicatoria (strain 85-10) (Xanthomonas campestris pv. vesicatoria), this protein is dCTP deaminase.